A 145-amino-acid chain; its full sequence is Ribosome maturation factor RimP (145 aa).

Belongs to the RimP family.

The protein resides in the cytoplasm. Its function is as follows. Required for maturation of 30S ribosomal subunits. The chain is Ribosome maturation factor RimP from Azotobacter vinelandii (strain DJ / ATCC BAA-1303).